Reading from the N-terminus, the 600-residue chain is UvrABC system protein C (600 aa).

Residues 15 to 100 (NSTGVYQYFN…IKQLHPKYNI (86 aa)) form the GIY-YIG domain. The region spanning 203–238 (SVLLKNLEKQMLVLAQNENYEEAAKVRDQIAMIKDL) is the UVR domain.

The protein belongs to the UvrC family. As to quaternary structure, interacts with UvrB in an incision complex.

It localises to the cytoplasm. The UvrABC repair system catalyzes the recognition and processing of DNA lesions. UvrC both incises the 5' and 3' sides of the lesion. The N-terminal half is responsible for the 3' incision and the C-terminal half is responsible for the 5' incision. In Campylobacter jejuni subsp. jejuni serotype O:2 (strain ATCC 700819 / NCTC 11168), this protein is UvrABC system protein C.